The following is a 152-amino-acid chain: Transcriptional regulator MraZ (152 aa).

2 consecutive SpoVT-AbrB domains span residues 5 to 52 and 81 to 124; these read ASAI…PIQE and AHEC…DEAA.

This sequence belongs to the MraZ family. Forms oligomers.

It localises to the cytoplasm. It is found in the nucleoid. In Shewanella halifaxensis (strain HAW-EB4), this protein is Transcriptional regulator MraZ.